A 638-amino-acid polypeptide reads, in one-letter code: Growth hormone receptor (638 aa).

Residues 1–18 form the signal peptide; the sequence is MDLWRVFLTLALAVSSDM. Topologically, residues 19 to 265 are extracellular; sequence FPGSGATPAT…TLAACEEDFR (247 aa). Intrachain disulfides connect Cys56-Cys66 and Cys101-Cys112. An N-linked (GlcNAc...) asparagine glycan is attached at Asn115. Cys126 and Cys140 form a disulfide bridge. A Fibronectin type-III domain is found at 151–254; it reads PPIGLNWTLL…EVLRVTFPQM (104 aa). N-linked (GlcNAc...) asparagine glycans are attached at residues Asn156, Asn161, and Asn200. The short motif at 240–244 is the WSXWS motif element; sequence YSEFS. The helical transmembrane segment at 266–289 threads the bilayer; that stretch reads FPWFLIIIFGIFGVAVMLFVVIFS. At 290-638 the chain is on the cytoplasmic side; the sequence is KQQRIKMLIL…STDQLNKIMQ (349 aa). The interval 295-380 is required for JAK2 binding; that stretch reads KMLILPPVPV…QEKSAGILGA (86 aa). Residues 298–306 carry the Box 1 motif motif; sequence ILPPVPVPK. A UbE motif motif is present at residues 341–350; that stretch reads DSWVEFIELD. Phosphoserine is present on Ser342. The segment at 357–389 is disordered; it reads KTEESDTDRLLSDDQEKSAGILGAKDDDSGRTS. Residues 363–373 are compositionally biased toward basic and acidic residues; the sequence is TDRLLSDDQEK. Tyr487 and Tyr594 each carry phosphotyrosine.

This sequence belongs to the type I cytokine receptor family. Type 1 subfamily. As to quaternary structure, on growth hormone (GH) binding, forms homodimers and binds JAK2 via a box 1-containing domain. In terms of processing, the soluble form (GHBP) is produced by phorbol ester-promoted proteolytic cleavage at the cell surface (shedding) by ADAM17/TACE. Shedding is inhibited by growth hormone (GH) binding to the receptor probably due to a conformational change in GHR rendering the receptor inaccessible to ADAM17. Post-translationally, on GH binding, phosphorylated on tyrosine residues in the cytoplasmic domain by JAK2. Phosphorylation on either (or all of) Tyr-534, Tyr-566 and/or Tyr-627 is required for STAT5 activation. Phosphorylation on Tyr-333 would seem necessary for JAK2 activation. Ubiquitinated by the ECS(SOCS2) complex following ligand-binding and phosphorylation by JAK2, leading to its degradation by the proteasome. Regulation by the ECS(SOCS2) complex acts as a negative feedback loop of growth hormone receptor signaling. Ubiquitination is not sufficient for GHR internalization. Highest expression in liver. Also expressed in heart, kidney and muscle.

Its subcellular location is the cell membrane. The protein localises to the secreted. Its function is as follows. Receptor for pituitary gland growth hormone involved in regulating postnatal body growth. On ligand binding, couples to, and activates the JAK2/STAT5 pathway. Functionally, receptor for pituitary gland growth hormone (GH1) involved in regulating postnatal body growth. On ligand binding, couples to the JAK2/STAT5 pathway. The soluble form (GHBP) acts as a reservoir of growth hormone in plasma and may be a modulator/inhibitor of GH signaling. The protein is Growth hormone receptor (Ghr) of Rattus norvegicus (Rat).